A 220-amino-acid polypeptide reads, in one-letter code: Flavin-dependent thymidylate synthase (220 aa).

Residues 1–208 form the ThyX domain; sequence MKIDILDKGF…PWTFEAFLKY (208 aa). Residues Thr-55, 78–80, and Glu-86 each bind FAD; that span reads RHR. Residues 75–78, 86–90, and Arg-147 contribute to the dUMP site; these read QWFR and ELSGR. The ThyX motif motif lies at 78–88; that stretch reads RHRIASYNELS. FAD is bound by residues 163 to 165 and Asn-169; that span reads NAR. Arg-174 is a binding site for dUMP. The Involved in ionization of N3 of dUMP, leading to its activation role is filled by Arg-174.

Belongs to the thymidylate synthase ThyX family. As to quaternary structure, homotetramer. It depends on FAD as a cofactor.

It carries out the reaction dUMP + (6R)-5,10-methylene-5,6,7,8-tetrahydrofolate + NADPH + H(+) = dTMP + (6S)-5,6,7,8-tetrahydrofolate + NADP(+). The protein operates within pyrimidine metabolism; dTTP biosynthesis. In terms of biological role, catalyzes the reductive methylation of 2'-deoxyuridine-5'-monophosphate (dUMP) to 2'-deoxythymidine-5'-monophosphate (dTMP) while utilizing 5,10-methylenetetrahydrofolate (mTHF) as the methyl donor, and NADPH and FADH(2) as the reductant. The chain is Flavin-dependent thymidylate synthase from Thermotoga petrophila (strain ATCC BAA-488 / DSM 13995 / JCM 10881 / RKU-1).